We begin with the raw amino-acid sequence, 152 residues long: Deoxyuridine 5'-triphosphate nucleotidohydrolase (152 aa).

Residues Arg-71–Gly-73, Asn-84, Leu-88–Asp-90, and Met-98 contribute to the substrate site.

The protein belongs to the dUTPase family. Mg(2+) serves as cofactor.

It carries out the reaction dUTP + H2O = dUMP + diphosphate + H(+). The protein operates within pyrimidine metabolism; dUMP biosynthesis; dUMP from dCTP (dUTP route): step 2/2. Its function is as follows. This enzyme is involved in nucleotide metabolism: it produces dUMP, the immediate precursor of thymidine nucleotides and it decreases the intracellular concentration of dUTP so that uracil cannot be incorporated into DNA. The protein is Deoxyuridine 5'-triphosphate nucleotidohydrolase of Klebsiella pneumoniae subsp. pneumoniae (strain ATCC 700721 / MGH 78578).